The chain runs to 373 residues: Mannan endo-1,4-beta-mannosidase A (373 aa).

The signal sequence occupies residues 1–17 (MKGLFAFGLGLLSLVNA). Residues W81, N193, and 194 to 196 (EPR) each bind substrate. E194 (proton donor/acceptor) is an active-site residue. C197 and C200 are disulfide-bonded. Substrate is bound by residues E230, Y267, and W271. A disulfide bridge links C289 with C296. E300 (nucleophile) is an active-site residue. Residues C308 and C359 are joined by a disulfide bond. W332 contacts substrate.

The protein belongs to the glycosyl hydrolase 5 (cellulase A) family. Monomer. In terms of processing, not glycosylated.

It is found in the secreted. The catalysed reaction is Random hydrolysis of (1-&gt;4)-beta-D-mannosidic linkages in mannans, galactomannans and glucomannans.. Endo-1,4-mannanase that catalyzes the random hydrolysis of (1-&gt;4)-beta-D-mannosidic linkages in mannans and heteromannans. It is a crucial enzyme for depolymerization of seed galactomannans and wood galactoglucomannans. Hydrolyzes structurally different mannan polysaccharides, such as galactomannans, glucomannans, and beta-1,4-mannans from different sources, yielding principally mannobiose. Also has transglycosylation activity. The chain is Mannan endo-1,4-beta-mannosidase A from Podospora anserina (strain S / ATCC MYA-4624 / DSM 980 / FGSC 10383) (Pleurage anserina).